Here is a 517-residue protein sequence, read N- to C-terminus: Alpha,alpha-trehalose-phosphate synthase [UDP-forming] 1 (517 aa).

Residues Y98 and D152 each contribute to the D-glucose 6-phosphate site. Residues R288 and K293 each contribute to the UDP site. Positions 288 and 293 each coordinate UDP-alpha-D-glucose. R326 is a D-glucose 6-phosphate binding site. 387 to 395 (DGMNLVAYE) lines the UDP-alpha-D-glucose pocket. 391–395 (LVAYE) lines the UDP pocket. Residues 486 to 517 (FHAKKASFSDNNSENGEPSNGVETPAQEQVAQ) form a disordered region. Over residues 493-517 (FSDNNSENGEPSNGVETPAQEQVAQ) the composition is skewed to polar residues.

The protein belongs to the glycosyltransferase 20 family.

It carries out the reaction D-glucose 6-phosphate + UDP-alpha-D-glucose = alpha,alpha-trehalose 6-phosphate + UDP + H(+). Its pathway is carbohydrate biosynthesis. Synthase catalytic subunit of the trehalose synthase complex that catalyzes the production of trehalose from glucose-6-phosphate and UDP-alpha-D-glucose in a two step process. This chain is Alpha,alpha-trehalose-phosphate synthase [UDP-forming] 1, found in Aspergillus niger.